Here is a 630-residue protein sequence, read N- to C-terminus: Mesothelin (630 aa).

A signal peptide spans 1 to 36 (MALPTARPLLGSCGTPALGSLLFLLFSLGWVQPSRT). N-linked (GlcNAc...) asparagine glycosylation occurs at Asn57. At Ser200 the chain carries Phosphoserine; by FAM20C. The tract at residues 262 to 286 (SIPQGIVAAWRQRSSRDPSWRQPER) is required for megakaryocyte-potentiating factor activity. Cys302 and Cys326 are joined by a disulfide. 3 N-linked (GlcNAc...) asparagine glycosylation sites follow: Asn388, Asn496, and Asn523. Residue Ser606 is the site of GPI-anchor amidated serine attachment. A propeptide spans 607–630 (GTPCLLGPGPVLTVLALLLASTLA) (removed in mature form).

The protein belongs to the mesothelin family. In terms of assembly, interacts with MUC16. In terms of processing, both MPF and the cleaved form of mesothelin are N-glycosylated. Proteolytically cleaved by a furin-like convertase to generate megakaryocyte-potentiating factor (MPF), and the cleaved form of mesothelin. Expressed in lung. Expressed at low levels in heart, placenta and kidney. Expressed in mesothelial cells. Highly expressed in mesotheliomas, ovarian cancers, and some squamous cell carcinomas (at protein level).

It localises to the cell membrane. It is found in the golgi apparatus. The protein localises to the secreted. In terms of biological role, membrane-anchored forms may play a role in cellular adhesion. Its function is as follows. Megakaryocyte-potentiating factor (MPF) potentiates megakaryocyte colony formation in vitro. The chain is Mesothelin (MSLN) from Homo sapiens (Human).